The following is a 447-amino-acid chain: MNAWEVNFDGLVGLTHHYAGLSFGNEASTRHRFQVSNPRQAAKQGLLKMKALADAGFPQAVIPPHERPFIPVLRQLGFSGSDEQVLEKVARQAPHWLSSVSSASPMWVANAATIAPSADTLDGKVHLTVANLNNKFHRSLEAHVTESLLKAIFNDEEKFSVHSALPQVALLGDEGAANHNRLGGHYGEPGMQLFVYGREEGNDTRPSRYPARQTREASEAVARLNQVNPQQVIFAQQNPDVIDQGVFHNDVIAVSNRQVLFCHQQAFARQSQLLANLRARVNGFMAIEVPATQVSVSDAVSTYLFNSQLLSRDDGSMMLVLPQECREHAGVWGYLNELLAADNPISELKVFDLRESMANGGGPACLRLRVVLTEEERRAVNPAVMMNDTLFNALNDWVDRYYRDRLTAADLADPQLLRGGREALDVLSQLLNLGSVYPFQREGGGNG.

Substrate-binding positions include 19-28 (AGLSFGNEAS), N110, and 137-138 (HR). E174 is an active-site residue. R212 contributes to the substrate binding site. H248 is a catalytic residue. Substrate is bound by residues D250 and N359. The active-site Nucleophile is C365.

Belongs to the succinylarginine dihydrolase family. In terms of assembly, homodimer.

It catalyses the reaction N(2)-succinyl-L-arginine + 2 H2O + 2 H(+) = N(2)-succinyl-L-ornithine + 2 NH4(+) + CO2. The protein operates within amino-acid degradation; L-arginine degradation via AST pathway; L-glutamate and succinate from L-arginine: step 2/5. In terms of biological role, catalyzes the hydrolysis of N(2)-succinylarginine into N(2)-succinylornithine, ammonia and CO(2). The polypeptide is N-succinylarginine dihydrolase (Escherichia coli (strain SE11)).